Reading from the N-terminus, the 270-residue chain is Glucosamine-6-phosphate deaminase (270 aa).

Aspartate 68 (proton acceptor; for enolization step) is an active-site residue. Catalysis depends on aspartate 145, which acts as the For ring-opening step. The active-site Proton acceptor; for ring-opening step is the histidine 147. Glutamate 152 serves as the catalytic For ring-opening step.

It belongs to the glucosamine/galactosamine-6-phosphate isomerase family. NagB subfamily.

The enzyme catalyses alpha-D-glucosamine 6-phosphate + H2O = beta-D-fructose 6-phosphate + NH4(+). Its pathway is amino-sugar metabolism; N-acetylneuraminate degradation; D-fructose 6-phosphate from N-acetylneuraminate: step 5/5. Functionally, catalyzes the reversible isomerization-deamination of glucosamine 6-phosphate (GlcN6P) to form fructose 6-phosphate (Fru6P) and ammonium ion. The sequence is that of Glucosamine-6-phosphate deaminase from Bifidobacterium longum subsp. infantis (strain ATCC 15697 / DSM 20088 / JCM 1222 / NCTC 11817 / S12).